Consider the following 1582-residue polypeptide: Dynein axonemal assembly factor 1 homolog (1582 aa).

6 LRR repeats span residues R38–T60, E61–T82, K83–R104, E105–I126, V129–V150, and T154–E175. Positions P189–W227 constitute an LRRCT domain. 11 disordered regions span residues A245–D420, S560–Q587, F859–R878, D913–A942, S1073–R1092, M1101–G1137, T1150–G1218, K1305–D1345, L1358–T1438, E1484–N1517, and P1529–Q1548. Positions E313–A327 are enriched in low complexity. Over residues H339–T392 the composition is skewed to basic and acidic residues. Positions T409–D420 are enriched in polar residues. Residues E572–M582 show a composition bias toward acidic residues. Residues S928 to A942 are compositionally biased toward acidic residues. Basic and acidic residues-rich tracts occupy residues L1078 to R1092 and R1103 to E1125. A compositionally biased stretch (low complexity) spans E1166–S1178. Composition is skewed to basic and acidic residues over residues P1321–T1335, S1398–E1427, and E1484–N1514. The span at P1529–E1540 shows a compositional bias: acidic residues.

The protein belongs to the DNAAF1 family.

It is found in the cell projection. It localises to the cilium. Its function is as follows. Cilium-specific protein required for cilia structures. The sequence is that of Dynein axonemal assembly factor 1 homolog (dtr) from Drosophila pseudoobscura pseudoobscura (Fruit fly).